We begin with the raw amino-acid sequence, 207 residues long: MTRTRVQKMIPKTIEYQKMISGQPYKAYDEELTQARCNAKKLMRRFNDTMGDLENVGPAELIKRRAELLAEVFVFDESSAPEIEPPMAFDYGFNVHFGKKFFANYNCTFLDVAIITIGNNVMLGPNVQLCTATHPLDFKARNSGIEFGLPINIQDNVWIGMGVIVLPGVTIGEGSVIGAGAVVTKDIPPNTLAVGSPAKPIRKIENE.

Belongs to the transferase hexapeptide repeat family.

The polypeptide is Putative acetyltransferase C18B11.09c (Schizosaccharomyces pombe (strain 972 / ATCC 24843) (Fission yeast)).